The primary structure comprises 121 residues: Large ribosomal subunit protein uL14c (121 aa).

This sequence belongs to the universal ribosomal protein uL14 family. As to quaternary structure, part of the 50S ribosomal subunit.

It is found in the plastid. The protein resides in the chloroplast. Binds to 23S rRNA. The protein is Large ribosomal subunit protein uL14c of Emiliania huxleyi (Coccolithophore).